Consider the following 111-residue polypeptide: Translation initiation factor 1A (111 aa).

The S1-like domain occupies lysine 11 to threonine 83.

This sequence belongs to the eIF-1A family.

Its function is as follows. Seems to be required for maximal rate of protein biosynthesis. Enhances ribosome dissociation into subunits and stabilizes the binding of the initiator Met-tRNA(I) to 40 S ribosomal subunits. The protein is Translation initiation factor 1A (eIF1A) of Methanopyrus kandleri (strain AV19 / DSM 6324 / JCM 9639 / NBRC 100938).